A 533-amino-acid chain; its full sequence is Adenylate kinase 7 (533 aa).

An adenylate kinase region spans residues 177 to 426; the sequence is PVKICILGPP…EPRNYGLTDE (250 aa). Residue 187–192 coordinates ATP; that stretch reads AVGKSS. The segment at 207 to 265 is NMP; it reads QLKDVISEAIAKLETIVAPKDIGEGKEEVEEEEEEENVEDAQELLDGIKESMEQNAGQL. Residues 242–265, 292–295, and Gln299 contribute to the AMP site; these read ENVE…AGQL and GFPK. Residues 347-357 form an LID region; sequence NLPERIVAGTH. Arg365 is an AMP binding site. Position 397 (Gly397) interacts with ATP. The stretch at 419–487 forms a coiled coil; the sequence is RNYGLTDEEK…EERELLEAQS (69 aa). The DPY-30 stretch occupies residues 489 to 533; it reads PLRNYLMTYVMPTLIQGLNECCNVRPEDPVDFLAEYLFKNNPEAQ.

It in the central section; belongs to the adenylate kinase family. This sequence in the C-terminal section; belongs to the dpy-30 family.

The protein localises to the cytoplasm. It is found in the cytosol. The protein resides in the cell projection. It localises to the cilium. Its subcellular location is the flagellum. The catalysed reaction is AMP + ATP = 2 ADP. The enzyme catalyses a 2'-deoxyribonucleoside 5'-diphosphate + ATP = a 2'-deoxyribonucleoside 5'-triphosphate + ADP. It carries out the reaction a ribonucleoside 5'-diphosphate + ATP = a ribonucleoside 5'-triphosphate + ADP. Nucleoside monophosphate (NMP) kinase that catalyzes the reversible transfer of the terminal phosphate group between nucleoside triphosphates and monophosphates. Has highest activity toward AMP, and weaker activity toward dAMP, CMP and dCMP. Also displays broad nucleoside diphosphate kinase activity. Involved in maintaining ciliary structure and function. This is Adenylate kinase 7 (AK7) from Macaca fascicularis (Crab-eating macaque).